A 173-amino-acid polypeptide reads, in one-letter code: Translation initiation factor IF-3 (173 aa).

The protein belongs to the IF-3 family. As to quaternary structure, monomer.

The protein resides in the cytoplasm. Functionally, IF-3 binds to the 30S ribosomal subunit and shifts the equilibrium between 70S ribosomes and their 50S and 30S subunits in favor of the free subunits, thus enhancing the availability of 30S subunits on which protein synthesis initiation begins. This chain is Translation initiation factor IF-3, found in Enterococcus faecalis (strain ATCC 700802 / V583).